The following is a 179-amino-acid chain: Acireductone dioxygenase (179 aa).

4 residues coordinate Fe(2+): histidine 85, histidine 87, glutamate 91, and histidine 132. Residues histidine 85, histidine 87, glutamate 91, and histidine 132 each coordinate Ni(2+).

Belongs to the acireductone dioxygenase (ARD) family. It depends on Fe(2+) as a cofactor. The cofactor is Ni(2+).

It localises to the cytoplasm. The protein localises to the nucleus. The enzyme catalyses 1,2-dihydroxy-5-(methylsulfanyl)pent-1-en-3-one + O2 = 4-methylsulfanyl-2-oxobutanoate + formate + 2 H(+). It catalyses the reaction 1,2-dihydroxy-5-(methylsulfanyl)pent-1-en-3-one + O2 = 3-(methylsulfanyl)propanoate + CO + formate + 2 H(+). It functions in the pathway amino-acid biosynthesis; L-methionine biosynthesis via salvage pathway; L-methionine from S-methyl-5-thio-alpha-D-ribose 1-phosphate: step 5/6. Catalyzes 2 different reactions between oxygen and the acireductone 1,2-dihydroxy-3-keto-5-methylthiopentene (DHK-MTPene) depending upon the metal bound in the active site. Fe-containing acireductone dioxygenase (Fe-ARD) produces formate and 2-keto-4-methylthiobutyrate (KMTB), the alpha-ketoacid precursor of methionine in the methionine recycle pathway. Ni-containing acireductone dioxygenase (Ni-ARD) produces methylthiopropionate, carbon monoxide and formate, and does not lie on the methionine recycle pathway. In Saccharomyces cerevisiae (strain ATCC 204508 / S288c) (Baker's yeast), this protein is Acireductone dioxygenase.